The chain runs to 539 residues: GMP synthase [glutamine-hydrolyzing] (539 aa).

Residues 4 to 202 (KILILDFGSQ…VLQIAGAKPD (199 aa)) enclose the Glutamine amidotransferase type-1 domain. Catalysis depends on C81, which acts as the Nucleophile. Catalysis depends on residues H176 and E178. The GMPS ATP-PPase domain maps to 203–395 (WIMSNHIEEA…LGLPPEMVYR (193 aa)). ATP is bound at residue 230-236 (SGGVDSS).

Homodimer.

The enzyme catalyses XMP + L-glutamine + ATP + H2O = GMP + L-glutamate + AMP + diphosphate + 2 H(+). Its pathway is purine metabolism; GMP biosynthesis; GMP from XMP (L-Gln route): step 1/1. Catalyzes the synthesis of GMP from XMP. The polypeptide is GMP synthase [glutamine-hydrolyzing] (Burkholderia ambifaria (strain MC40-6)).